Here is an 88-residue protein sequence, read N- to C-terminus: Small ribosomal subunit protein bS20 (88 aa).

Belongs to the bacterial ribosomal protein bS20 family.

In terms of biological role, binds directly to 16S ribosomal RNA. This is Small ribosomal subunit protein bS20 from Brucella abortus (strain S19).